We begin with the raw amino-acid sequence, 201 residues long: Transgelin (201 aa).

Ala2 is subject to N-acetylalanine. In terms of domain architecture, Calponin-homology (CH) spans 24–137 (EELEERLVEW…RTLMALGSLA (114 aa)). A Phosphoserine modification is found at Ser166. Lys172 carries the N6-acetyllysine modification. Residues 175-200 (IGLQMGSNRGASQAGMTGYGRPRQII) form a Calponin-like repeat. Position 181 is a phosphoserine (Ser181). At Arg183 the chain carries Omega-N-methylarginine.

This sequence belongs to the calponin family.

It is found in the cytoplasm. Actin cross-linking/gelling protein. Involved in calcium interactions and contractile properties of the cell that may contribute to replicative senescence. The protein is Transgelin (TAGLN) of Homo sapiens (Human).